The chain runs to 414 residues: Serine/threonine transporter SstT (414 aa).

Residues 2 to 15 (TTQRSPGLFRRLAH) lie on the Cytoplasmic side of the membrane. A helical transmembrane segment spans residues 16-36 (GSLVKQILVGLVLGILLAWIS). The Periplasmic portion of the chain corresponds to 37 to 45 (KPAAEAVGL). Residues 46–66 (LGTLFVGALKAVAPILVLMLV) traverse the membrane as a helical segment. The Cytoplasmic segment spans residues 67–83 (MASIANHQHGQKTNIRP). A helical transmembrane segment spans residues 84 to 104 (ILFLYLLGTFSAALAAVVFSF). At 105 to 142 (AFPSTLHLSSSAGDISPPSGIVEVMRGLVMSMVSNPID) the chain is on the periplasmic side. Residues 143 to 163 (ALLKGNYIGILVWAIGLGFAL) form a helical membrane-spanning segment. Topologically, residues 164–179 (RHGNETTKNLVNDMSN) are cytoplasmic. The chain crosses the membrane as a helical span at residues 180 to 200 (AVTFMVKLVIRFAPFGIFGLV). Residues 201 to 217 (SSTLATTGFSTLWGYAQ) lie on the Periplasmic side of the membrane. Residues 218 to 238 (LLVVLVGCMLLVALVVNPLLV) form a helical membrane-spanning segment. Residues 239-299 (WWKIRRNPFP…VSIPLGATIN (61 aa)) lie on the Cytoplasmic side of the membrane. A helical membrane pass occupies residues 300–320 (MAGAAITITVLTLAAVNTLGI). Residues 321 to 331 (PVDLPTALLLS) lie on the Periplasmic side of the membrane. A helical transmembrane segment spans residues 332–352 (VVASLCACGASGVAGGSLLLI). At 353-414 (PLACNMFGIS…DRLANSALRN (62 aa)) the chain is on the cytoplasmic side.

The protein belongs to the dicarboxylate/amino acid:cation symporter (DAACS) (TC 2.A.23) family.

It localises to the cell inner membrane. It carries out the reaction L-serine(in) + Na(+)(in) = L-serine(out) + Na(+)(out). The enzyme catalyses L-threonine(in) + Na(+)(in) = L-threonine(out) + Na(+)(out). Involved in the import of serine and threonine into the cell, with the concomitant import of sodium (symport system). This Shigella flexneri protein is Serine/threonine transporter SstT.